The sequence spans 387 residues: Protein TsgA homolog (387 aa).

Helical transmembrane passes span 11-31 (WISFFSYAFTGALIVITGMIM), 47-67 (NIFTFLNAGILISIFLNSWLI), 76-96 (LIFGFLFSIIAILGIVFSTSI), 101-121 (INIFILGLVSGITMSIGTFII), 134-154 (LLLTDSFFSMSGMIFPIISAY), 160-180 (ILWYWIYVFLGIIYFLIFILT), 205-225 (IILLSISALLYILGQLSFISW), 243-263 (VLVSNFWMAYMIGMWCFSFII), 271-291 (MFIFLTGSSSVLMYCFIYSKS), 299-319 (IISLGFFSSAIYTIIITLASL), 331-351 (LILFFGTIGTLLTFIITSPIV), and 358-378 (TTLIFSNVLYVIVFFLSCIIF).

This sequence belongs to the major facilitator superfamily. TsgA family.

Its subcellular location is the cell membrane. The polypeptide is Protein TsgA homolog (Buchnera aphidicola subsp. Schizaphis graminum (strain Sg)).